The chain runs to 116 residues: Ribonuclease P protein component (116 aa).

It belongs to the RnpA family. Consists of a catalytic RNA component (M1 or rnpB) and a protein subunit.

It catalyses the reaction Endonucleolytic cleavage of RNA, removing 5'-extranucleotides from tRNA precursor.. Its function is as follows. RNaseP catalyzes the removal of the 5'-leader sequence from pre-tRNA to produce the mature 5'-terminus. It can also cleave other RNA substrates such as 4.5S RNA. The protein component plays an auxiliary but essential role in vivo by binding to the 5'-leader sequence and broadening the substrate specificity of the ribozyme. This chain is Ribonuclease P protein component, found in Bacillus velezensis (strain DSM 23117 / BGSC 10A6 / LMG 26770 / FZB42) (Bacillus amyloliquefaciens subsp. plantarum).